We begin with the raw amino-acid sequence, 436 residues long: Histidinol dehydrogenase (436 aa).

Residues Tyr135, Gln196, and Asn219 each contribute to the NAD(+) site. Substrate contacts are provided by Ser242, Gln264, and His267. Positions 264 and 267 each coordinate Zn(2+). Residues Glu332 and His333 each act as proton acceptor in the active site. Substrate contacts are provided by His333, Asp366, Glu420, and His425. Asp366 provides a ligand contact to Zn(2+). His425 contributes to the Zn(2+) binding site.

This sequence belongs to the histidinol dehydrogenase family. Zn(2+) serves as cofactor.

The catalysed reaction is L-histidinol + 2 NAD(+) + H2O = L-histidine + 2 NADH + 3 H(+). The protein operates within amino-acid biosynthesis; L-histidine biosynthesis; L-histidine from 5-phospho-alpha-D-ribose 1-diphosphate: step 9/9. In terms of biological role, catalyzes the sequential NAD-dependent oxidations of L-histidinol to L-histidinaldehyde and then to L-histidine. The chain is Histidinol dehydrogenase from Methylococcus capsulatus (strain ATCC 33009 / NCIMB 11132 / Bath).